Reading from the N-terminus, the 104-residue chain is L-rhamnose mutarotase (104 aa).

Residue Tyr18 coordinates substrate. The active-site Proton donor is the His22. Substrate is bound by residues Tyr41 and 76 to 77 (WW).

The protein belongs to the rhamnose mutarotase family. In terms of assembly, homodimer.

The protein resides in the cytoplasm. The catalysed reaction is alpha-L-rhamnose = beta-L-rhamnose. It functions in the pathway carbohydrate metabolism; L-rhamnose metabolism. In terms of biological role, involved in the anomeric conversion of L-rhamnose. The chain is L-rhamnose mutarotase from Shouchella clausii (strain KSM-K16) (Alkalihalobacillus clausii).